We begin with the raw amino-acid sequence, 95 residues long: Aspartyl/glutamyl-tRNA(Asn/Gln) amidotransferase subunit C (95 aa).

This sequence belongs to the GatC family. In terms of assembly, heterotrimer of A, B and C subunits.

The catalysed reaction is L-glutamyl-tRNA(Gln) + L-glutamine + ATP + H2O = L-glutaminyl-tRNA(Gln) + L-glutamate + ADP + phosphate + H(+). It carries out the reaction L-aspartyl-tRNA(Asn) + L-glutamine + ATP + H2O = L-asparaginyl-tRNA(Asn) + L-glutamate + ADP + phosphate + 2 H(+). In terms of biological role, allows the formation of correctly charged Asn-tRNA(Asn) or Gln-tRNA(Gln) through the transamidation of misacylated Asp-tRNA(Asn) or Glu-tRNA(Gln) in organisms which lack either or both of asparaginyl-tRNA or glutaminyl-tRNA synthetases. The reaction takes place in the presence of glutamine and ATP through an activated phospho-Asp-tRNA(Asn) or phospho-Glu-tRNA(Gln). This Thioalkalivibrio sulfidiphilus (strain HL-EbGR7) protein is Aspartyl/glutamyl-tRNA(Asn/Gln) amidotransferase subunit C.